The primary structure comprises 103 residues: Small ribosomal subunit protein uS10 (103 aa).

It belongs to the universal ribosomal protein uS10 family. Part of the 30S ribosomal subunit.

Its function is as follows. Involved in the binding of tRNA to the ribosomes. The chain is Small ribosomal subunit protein uS10 from Thioalkalivibrio sulfidiphilus (strain HL-EbGR7).